The chain runs to 54 residues: Light-harvesting protein B-880 beta chain (54 aa).

The Cytoplasmic segment spans residues 1–20; that stretch reads AEDRSSLSGVSDAEAKEFHA. Residues histidine 19 and histidine 37 each coordinate a bacteriochlorophyll. Residues 21–43 traverse the membrane as a helical segment; it reads LFVSSFTAFIVIAVLAHVLAWAW. Residues 44 to 54 are Periplasmic-facing; the sequence is RPWIPGPKGWA.

Belongs to the antenna complex beta subunit family. In terms of assembly, the core complex is formed by different alpha and beta chains, binding bacteriochlorophyll molecules, and arranged most probably in tetrameric structures disposed around the reaction center. The non-pigmented gamma chains may constitute additional components.

The protein resides in the cell inner membrane. Antenna complexes are light-harvesting systems, which transfer the excitation energy to the reaction centers. This chain is Light-harvesting protein B-880 beta chain, found in Rhodoblastus acidophilus (Rhodopseudomonas acidophila).